The sequence spans 698 residues: Interleukin enhancer-binding factor 3 (698 aa).

Residues R5 to G379 enclose the DZF domain. 3 disordered regions span residues Q51 to T88, P374 to A403, and E473 to K522. The span at E61–T71 shows a compositional bias: acidic residues. 2 stretches are compositionally biased toward basic and acidic residues: residues E72–T81 and P374–P384. Positions K372 to K390 match the Bipartite nuclear localization signal motif. Positions E399–L468 constitute a DRBM 1 domain. Over residues T490–A503 the composition is skewed to polar residues. Residues H520–P586 form the DRBM 2 domain.

As to quaternary structure, a component of a ybx2/frgy2-containing mRNA-ribonucleoprotein (mRNP) complex. Also a component of the CCAAT box transcription factor (CBTF) complex. Post-translationally, phosphorylated. Phosphorylation affects nuclear translocation. Methylated by protein arginine N-methyltransferase 1 (prmt1b) in the RGG-rich domain. Methylation decreases DNA-binding and thereby decreases transcription of the gata2 gene, but does not regulate dsRNA binding or subcellular localization.

It is found in the nucleus. Its subcellular location is the cytoplasm. RNA-binding protein that plays an essential role in the biogenesis of circular RNAs (circRNAs) which are produced by back-splicing circularization of pre-mRNAs. Within the nucleus, promotes circRNAs processing by stabilizing the regulatory elements residing in the flanking introns of the circularized exons. Plays thereby a role in the back-splicing of a subset of circRNAs. As a consequence, participates in a wide range of transcriptional and post-transcriptional processes. Binds to poly-U elements and AU-rich elements (AREs) in the 3'-UTR of target mRNAs. Upon viral infection, ILF3 accumulates in the cytoplasm and participates in the innate antiviral response. Mechanistically, ILF3 becomes phosphorylated and activated by the double-stranded RNA-activated protein kinase/PKR which releases ILF3 from cellular mature circRNAs. In turn, unbound ILF3 molecules are able to interact with and thus inhibit viral mRNAs. Has a cytoplasmic role early in development as part of a ribonucleoprotein (mRNP) complex which may regulate mRNA transport and/or translation. Following nuclear localization at the mid-blastula transition, acts as a transcription factor and binds the 5'-CCAAT-3' promoter sequence to regulate transcription of the gata2 gene as a subunit of the CCAAT box transcription factor (CBTF). Its role as an mRNP component negatively regulates its activity as a transcription factor by precluding its nuclear localization. This is Interleukin enhancer-binding factor 3 from Xenopus tropicalis (Western clawed frog).